A 501-amino-acid polypeptide reads, in one-letter code: ATP synthase subunit alpha (501 aa).

Residue 170-177 participates in ATP binding; the sequence is GDRQTGKS.

This sequence belongs to the ATPase alpha/beta chains family. As to quaternary structure, F-type ATPases have 2 components, CF(1) - the catalytic core - and CF(0) - the membrane proton channel. CF(1) has five subunits: alpha(3), beta(3), gamma(1), delta(1), epsilon(1). CF(0) has three main subunits: a(1), b(2) and c(9-12). The alpha and beta chains form an alternating ring which encloses part of the gamma chain. CF(1) is attached to CF(0) by a central stalk formed by the gamma and epsilon chains, while a peripheral stalk is formed by the delta and b chains.

It localises to the cell membrane. It carries out the reaction ATP + H2O + 4 H(+)(in) = ADP + phosphate + 5 H(+)(out). Produces ATP from ADP in the presence of a proton gradient across the membrane. The alpha chain is a regulatory subunit. The sequence is that of ATP synthase subunit alpha from Acholeplasma laidlawii (strain PG-8A).